The following is a 130-amino-acid chain: Small ribosomal subunit protein uS8 (130 aa).

The protein belongs to the universal ribosomal protein uS8 family. In terms of assembly, part of the 30S ribosomal subunit.

One of the primary rRNA binding proteins, it binds directly to 16S rRNA central domain where it helps coordinate assembly of the platform of the 30S subunit. The sequence is that of Small ribosomal subunit protein uS8 from Pyrococcus horikoshii (strain ATCC 700860 / DSM 12428 / JCM 9974 / NBRC 100139 / OT-3).